The primary structure comprises 354 residues: UDP-N-acetylglucosamine--N-acetylmuramyl-(pentapeptide) pyrophosphoryl-undecaprenol N-acetylglucosamine transferase (354 aa).

UDP-N-acetyl-alpha-D-glucosamine is bound by residues 11–13, arginine 164, serine 194, and glutamine 289; that span reads SAG.

The protein belongs to the glycosyltransferase 28 family. MurG subfamily.

The protein resides in the cell membrane. The catalysed reaction is di-trans,octa-cis-undecaprenyl diphospho-N-acetyl-alpha-D-muramoyl-L-alanyl-D-glutamyl-meso-2,6-diaminopimeloyl-D-alanyl-D-alanine + UDP-N-acetyl-alpha-D-glucosamine = di-trans,octa-cis-undecaprenyl diphospho-[N-acetyl-alpha-D-glucosaminyl-(1-&gt;4)]-N-acetyl-alpha-D-muramoyl-L-alanyl-D-glutamyl-meso-2,6-diaminopimeloyl-D-alanyl-D-alanine + UDP + H(+). It functions in the pathway cell wall biogenesis; peptidoglycan biosynthesis. In terms of biological role, cell wall formation. Catalyzes the transfer of a GlcNAc subunit on undecaprenyl-pyrophosphoryl-MurNAc-pentapeptide (lipid intermediate I) to form undecaprenyl-pyrophosphoryl-MurNAc-(pentapeptide)GlcNAc (lipid intermediate II). This chain is UDP-N-acetylglucosamine--N-acetylmuramyl-(pentapeptide) pyrophosphoryl-undecaprenol N-acetylglucosamine transferase, found in Shouchella clausii (strain KSM-K16) (Alkalihalobacillus clausii).